A 460-amino-acid chain; its full sequence is Cysteine--tRNA ligase (460 aa).

Residue Cys27 coordinates Zn(2+). The short motif at Pro29–Asn39 is the 'HIGH' region element. Residues Cys207, His232, and Glu236 each contribute to the Zn(2+) site. Positions Lys264–Ser268 match the 'KMSKS' region motif. An ATP-binding site is contributed by Lys267.

It belongs to the class-I aminoacyl-tRNA synthetase family. As to quaternary structure, monomer. It depends on Zn(2+) as a cofactor.

Its subcellular location is the cytoplasm. The catalysed reaction is tRNA(Cys) + L-cysteine + ATP = L-cysteinyl-tRNA(Cys) + AMP + diphosphate. The protein is Cysteine--tRNA ligase of Thermotoga petrophila (strain ATCC BAA-488 / DSM 13995 / JCM 10881 / RKU-1).